We begin with the raw amino-acid sequence, 590 residues long: Protein NRT1/ PTR FAMILY 8.5 (590 aa).

The chain crosses the membrane as a helical span at residues 96–116 (ASDVMIWQGTCYITPLIGAVI). Thr126 carries the phosphothreonine modification. A run of 10 helical transmembrane segments spans residues 130–150 (FSAI…LPVL), 168–188 (TVQY…TGGI), 214–234 (FFNW…TLLV), 242–262 (WGLG…SFFI), 365–385 (FPIW…STLF), 401–421 (IPPA…IPIY), 445–465 (MGIG…VETV), 478–498 (IFWQ…FFIG), 524–544 (AVGS…TALG), and 562–582 (FFWL…LICV).

It belongs to the major facilitator superfamily. Proton-dependent oligopeptide transporter (POT/PTR) (TC 2.A.17) family. In terms of tissue distribution, expressed in shoots, roots, stems, leaves, flowers and siliques.

It localises to the membrane. The chain is Protein NRT1/ PTR FAMILY 8.5 (NPF8.5) from Arabidopsis thaliana (Mouse-ear cress).